Reading from the N-terminus, the 354-residue chain is Cyclin-D1-2 (354 aa).

Disordered regions lie at residues 37-74 and 331-354; these read FFQQLQGPAPAVSSSPSTTTATAPAAAGSCDDGGEEEE and TTATTAVSSEEVVSSSPPSKRRKM. Low complexity-rich tracts occupy residues 44-66 and 331-346; these read PAPAVSSSPSTTTATAPAAAGSC and TTATTAVSSEEVVSSS.

It belongs to the cyclin family. Cyclin D subfamily.

In Oryza sativa subsp. japonica (Rice), this protein is Cyclin-D1-2 (CYCD1-2).